We begin with the raw amino-acid sequence, 2624 residues long: Highly reducing polyketide synthase ALT1 (2624 aa).

The region spanning 28 to 449 (VLPLAIVGMG…GSNAHCILES (422 aa)) is the Ketosynthase family 3 (KS3) domain. Cys200 functions as the For beta-ketoacyl synthase activity in the catalytic mechanism. Residues 289 to 308 (VRGTSSNSDGKTPGMSMPSS) are disordered. Residues His335 and His372 each act as for beta-ketoacyl synthase activity in the active site. A compositionally biased stretch (polar residues) spans 523–544 (ESYSNHHTLTETTNPSNNTATN). Residues 523–545 (ESYSNHHTLTETTNPSNNTATNG) are disordered. The tract at residues 639–945 (VFTGQGAQWA…GYTPAMIRGK (307 aa)) is malonyl-CoA:ACP transacylase (MAT) domain. The segment at 1009–1140 (HELLGSQTLE…GQVRPGRDAH (132 aa)) is N-terminal hotdog fold. A dehydratase (DH) domain region spans residues 1009-1301 (HELLGSQTLE…LEGGKFSPIE (293 aa)). Positions 1009–1306 (HELLGSQTLE…FSPIEVDDGI (298 aa)) constitute a PKS/mFAS DH domain. Catalysis depends on His1041, which acts as the Proton acceptor; for dehydratase activity. Positions 1157 to 1306 (QYPRPVDSLY…FSPIEVDDGI (150 aa)) are C-terminal hotdog fold. The active-site Proton donor; for dehydratase activity is Asp1217. A methyltransferase (CMet) domain region spans residues 1493–1599 (LEIGAGTGGA…RKLLAPEGYL (107 aa)). An enoyl reductase (ER) (ER) domain region spans residues 1895–2205 (GLLQTLKWVD…KGTHLGKIVV (311 aa)). Positions 2230-2509 (TYVLVGGLGG…DSDALRFFIT (280 aa)) are ketoreductase (KR) domain. The 79-residue stretch at 2522-2600 (ASLDLVTRTI…GLAKLILDAL (79 aa)) folds into the Carrier domain. Ser2559 carries the post-translational modification O-(pantetheine 4'-phosphoryl)serine.

The protein operates within mycotoxin biosynthesis. Highly reducing polyketide synthase; part of the gene cluster that mediates the biosynthesis of the host-selective toxins (HSTs) AAL-toxins, sphinganine-analog mycotoxins responsible for Alternaria stem canker on tomato by the tomato pathotype. The biosynthesis starts with the polyketide synthase ALT1-catalyzed C-16 carbon chain assembly from one starter acetyl-CoA unit with malonyl-CoA extender units. ALT1 also selectively transfers methyl groups at the first and the third cycle of chain elongation for AAL toxin. The C-16 polyketide chain is released from the enzyme by a nucleophilic attack of a carbanion, which is derived from R-carbon of glycin by decarboxylation, on the carbonyl carbon of polyketide acyl chain. This step is probably catalyzed by a pyridoxal 5'-phosphate-dependent aminoacyl transferase ALT4. The respective functions of the other enzymes encoded by the cluster have still to be elucidated. The sphingosine N-acyltransferase-like protein ALT7 seems not to act as a resistance/self-tolerance factor against the toxin in the toxin biosynthetic gene cluster, contrary to what is expected. This is Highly reducing polyketide synthase ALT1 from Alternaria alternata (Alternaria rot fungus).